The primary structure comprises 425 residues: Kynureninase (425 aa).

Residues Leu-105, Thr-106, 133–136, Asp-218, His-221, and Tyr-243 each bind pyridoxal 5'-phosphate; that span reads FPSD. Lys-244 is modified (N6-(pyridoxal phosphate)lysine). Residues Trp-274 and Asn-302 each contribute to the pyridoxal 5'-phosphate site.

The protein belongs to the kynureninase family. Homodimer. Pyridoxal 5'-phosphate serves as cofactor.

The enzyme catalyses L-kynurenine + H2O = anthranilate + L-alanine + H(+). It catalyses the reaction 3-hydroxy-L-kynurenine + H2O = 3-hydroxyanthranilate + L-alanine + H(+). It participates in amino-acid degradation; L-kynurenine degradation; L-alanine and anthranilate from L-kynurenine: step 1/1. The protein operates within cofactor biosynthesis; NAD(+) biosynthesis; quinolinate from L-kynurenine: step 2/3. Catalyzes the cleavage of L-kynurenine (L-Kyn) and L-3-hydroxykynurenine (L-3OHKyn) into anthranilic acid (AA) and 3-hydroxyanthranilic acid (3-OHAA), respectively. The sequence is that of Kynureninase from Christiangramia forsetii (strain DSM 17595 / CGMCC 1.15422 / KT0803) (Gramella forsetii).